We begin with the raw amino-acid sequence, 420 residues long: 3-phosphoshikimate 1-carboxyvinyltransferase (420 aa).

3-phosphoshikimate contacts are provided by K20, S21, and R25. K20 contacts phosphoenolpyruvate. Residue R119 coordinates phosphoenolpyruvate. S161, S162, Q163, S189, D303, Q326, and K330 together coordinate 3-phosphoshikimate. Residue Q163 participates in phosphoenolpyruvate binding. Residue D303 is the Proton acceptor of the active site. Residues R334, R375, and K400 each coordinate phosphoenolpyruvate.

Belongs to the EPSP synthase family. Monomer.

Its subcellular location is the cytoplasm. The enzyme catalyses 3-phosphoshikimate + phosphoenolpyruvate = 5-O-(1-carboxyvinyl)-3-phosphoshikimate + phosphate. The protein operates within metabolic intermediate biosynthesis; chorismate biosynthesis; chorismate from D-erythrose 4-phosphate and phosphoenolpyruvate: step 6/7. Functionally, catalyzes the transfer of the enolpyruvyl moiety of phosphoenolpyruvate (PEP) to the 5-hydroxyl of shikimate-3-phosphate (S3P) to produce enolpyruvyl shikimate-3-phosphate and inorganic phosphate. The polypeptide is 3-phosphoshikimate 1-carboxyvinyltransferase (Dehalococcoides mccartyi (strain ATCC BAA-2266 / KCTC 15142 / 195) (Dehalococcoides ethenogenes (strain 195))).